The following is a 172-amino-acid chain: Female-specific lacrimal gland protein (172 aa).

Residues 1–16 form the signal peptide; it reads MVKFLLLALALGVSCA. 2 disulfide bridges follow: Cys60/Cys64 and Cys79/Cys170.

It belongs to the calycin superfamily. Lipocalin family. Expressed in the lacrimal gland from where it is secreted into tears (at protein level).

Its subcellular location is the secreted. The polypeptide is Female-specific lacrimal gland protein (Mesocricetus auratus (Golden hamster)).